The following is a 433-amino-acid chain: Evolutionarily conserved signaling intermediate in Toll pathway, mitochondrial (433 aa).

The transit peptide at M1–H48 directs the protein to the mitochondrion. The interval Q36–R63 is disordered. K372 is covalently cross-linked (Glycyl lysine isopeptide (Lys-Gly) (interchain with G-Cter in ubiquitin)). Residues S397–S433 form a disordered region.

It belongs to the ECSIT family. In terms of assembly, interacts with MAP3K1, SMAD4 and TRAF6. Interacts with SMAD1 only after BMP4-treatment. Part of the mitochondrial complex I assembly/MCIA complex that comprises at least the core subunits TMEM126B, NDUFAF1, ECSIT and ACAD9 and complement subunits such as COA1 and TMEM186. Interacts with NDUFAF1. Interacts with ACAD9. Interacts with TRIM59. Interacts with TMEM70 and TMEM242. Interacts (when ubiquitinated) with NF-kappa-B subunits RELA and NFKB1. Interacts with RIGI, IFIT1 and MAVS; these interactions promote RLR-mediated type I IFN induction. Interacts with SQSTM1; this interaction inhibits TLR4 signaling via functional regulation of the TRAF6-ECSIT complex. Interacts with cereblon/CRBN; this interaction inhibits the ubiquitination of ECSIT. Post-translationally, ubiquitinated on Lys-372; leading to translocation in the nucleus together with RELA and NFKB1 and expression of NF-kappa-B-dependent genes.

The protein localises to the cytoplasm. It localises to the nucleus. Its subcellular location is the mitochondrion. In terms of biological role, adapter protein that plays a role in different signaling pathways including TLRs and IL-1 pathways or innate antiviral induction signaling. Plays a role in the activation of NF-kappa-B by forming a signal complex with TRAF6 and TAK1/MAP3K7 to activate TAK1/MAP3K7 leading to activation of IKKs. Once ubiquitinated, interacts with the dissociated RELA and NFKB1 proteins and translocates to the nucleus where it induces NF-kappa-B-dependent gene expression. Plays a role in innate antiviral immune response by bridging the pattern recognition receptors RIGI and MDA5/IFIT1 to the MAVS complex at the mitochondrion. Promotes proteolytic activation of MAP3K1. Involved in the BMP signaling pathway. Required for normal embryonic development. Functionally, as part of the MCIA complex, involved in the assembly of the mitochondrial complex I. The polypeptide is Evolutionarily conserved signaling intermediate in Toll pathway, mitochondrial (Bos taurus (Bovine)).